Here is a 205-residue protein sequence, read N- to C-terminus: MQAPPSFYEGDTLEVAKKLLGQKLVHIVDGIKRSGIIVEVEAYKGPDDKAAHSYGGRRTDRTEVMFGAPGHAYVYLIYGMYHCFNVITAPVGTPQGVLIRALEPVDGIEEIKLARYNKTDITKAQYKNLTSGPGKLCRALGITLKERGLSLQSDTLHIELVPKDEHISSQYKIAAGPRINIDYAEEAVHYPWRFYYKGHPFVSKK.

Belongs to the DNA glycosylase MPG family.

This chain is Putative 3-methyladenine DNA glycosylase, found in Bacillus cereus (strain G9842).